A 133-amino-acid chain; its full sequence is Small ribosomal subunit protein uS11 (133 aa).

It belongs to the universal ribosomal protein uS11 family. Part of the 30S ribosomal subunit. Interacts with proteins S7 and S18. Binds to IF-3.

Located on the platform of the 30S subunit, it bridges several disparate RNA helices of the 16S rRNA. Forms part of the Shine-Dalgarno cleft in the 70S ribosome. The chain is Small ribosomal subunit protein uS11 from Ralstonia pickettii (strain 12J).